A 134-amino-acid polypeptide reads, in one-letter code: uncharacterized protein (134 aa).

This is an uncharacterized protein from Synechococcus elongatus (strain ATCC 33912 / PCC 7942 / FACHB-805) (Anacystis nidulans R2).